The following is a 211-amino-acid chain: Large ribosomal subunit protein uL4 (211 aa).

The disordered stretch occupies residues 41–87; that stretch reads QAHARQGTASTLTRSEVRGGGRKPYKQKGTGRARQGSIRTPLRPGGG. Over residues 60–71 the composition is skewed to basic residues; the sequence is GGRKPYKQKGTG.

This sequence belongs to the universal ribosomal protein uL4 family. As to quaternary structure, part of the 50S ribosomal subunit.

In terms of biological role, one of the primary rRNA binding proteins, this protein initially binds near the 5'-end of the 23S rRNA. It is important during the early stages of 50S assembly. It makes multiple contacts with different domains of the 23S rRNA in the assembled 50S subunit and ribosome. Its function is as follows. Forms part of the polypeptide exit tunnel. This Parasynechococcus marenigrum (strain WH8102) protein is Large ribosomal subunit protein uL4.